A 148-amino-acid polypeptide reads, in one-letter code: UPF0260 protein KPN78578_22800 (148 aa).

It belongs to the UPF0260 family.

In Klebsiella pneumoniae subsp. pneumoniae (strain ATCC 700721 / MGH 78578), this protein is UPF0260 protein KPN78578_22800.